The following is a 259-amino-acid chain: MEMLQIAGKTFESRLFVGTGKFASSDLMEAVVLASQSRMVTVALKRVEIGRGEEDDMISRIVRHPEITLLPNTSGVRSAKEAILAAELAREALQTNWLKLEVHPDPRYLLPDPIETLRATEELVRRGFIVLPYVQADPVLCKHLEEAGAATVMPLGAPIGSNRGLKTREMIRIIIEQSRVPVVIDAGIGAPSQAAEAMEMGADAVLVNTAIAVAEDPVSMATAFRLAVEAGRMAFEAKLGSVRSEAEASSPFTSFLNLK.

Lys-99 (schiff-base intermediate with DXP) is an active-site residue. Residues Gly-160, 186-187 (AG), and 208-209 (NT) contribute to the 1-deoxy-D-xylulose 5-phosphate site.

This sequence belongs to the ThiG family. Homotetramer. Forms heterodimers with either ThiH or ThiS.

It localises to the cytoplasm. It catalyses the reaction [ThiS sulfur-carrier protein]-C-terminal-Gly-aminoethanethioate + 2-iminoacetate + 1-deoxy-D-xylulose 5-phosphate = [ThiS sulfur-carrier protein]-C-terminal Gly-Gly + 2-[(2R,5Z)-2-carboxy-4-methylthiazol-5(2H)-ylidene]ethyl phosphate + 2 H2O + H(+). It participates in cofactor biosynthesis; thiamine diphosphate biosynthesis. Its function is as follows. Catalyzes the rearrangement of 1-deoxy-D-xylulose 5-phosphate (DXP) to produce the thiazole phosphate moiety of thiamine. Sulfur is provided by the thiocarboxylate moiety of the carrier protein ThiS. In vitro, sulfur can be provided by H(2)S. This chain is Thiazole synthase, found in Porphyromonas gingivalis (strain ATCC 33277 / DSM 20709 / CIP 103683 / JCM 12257 / NCTC 11834 / 2561).